We begin with the raw amino-acid sequence, 274 residues long: uncharacterized protein (274 aa).

It is found in the plastid. Its subcellular location is the chloroplast. This is an uncharacterized protein from Euglena gracilis.